The primary structure comprises 102 residues: Head completion protein gp15 (102 aa).

It belongs to the Caudoviricetes gp6/gp15 head completion protein family. Homododecamer. Interacts with the stopper protein gp16. Interacts with the portal protein; this interaction occurs at the end of the packaging when the terminase complex is replaced by the connector.

The protein resides in the virion. Its function is as follows. Head completion protein that exhibits an open central channel for viral DNA ejection. Part of the head-tail connector by binding to the portal protein and to the head completion protein 16. The protein is Head completion protein gp15 of Bacillus phage SPP1 (Bacteriophage SPP1).